The chain runs to 63 residues: Conotoxin TxMRCL-D012 (63 aa).

The first 19 residues, 1–19 (MRCLPVFVILLLLIASTPS), serve as a signal peptide directing secretion. Positions 20–47 (DTVPLKTKDDMPQASFHGNARRTLQMLS) are excised as a propeptide. At Gln-50 the chain carries Pyrrolidone carboxylic acid.

Belongs to the conotoxin T superfamily. Contains 2 disulfide bonds that can be either 'C1-C3, C2-C4' or 'C1-C4, C2-C3', since these disulfide connectivities have been observed for conotoxins with cysteine framework V (for examples, see AC P0DQQ7 and AC P81755). Expressed by the venom duct.

The protein localises to the secreted. This is Conotoxin TxMRCL-D012 from Conus textile (Cloth-of-gold cone).